A 319-amino-acid chain; its full sequence is 4-diphosphocytidyl-2-C-methyl-D-erythritol kinase (319 aa).

The active site involves lysine 18. An ATP-binding site is contributed by 103–113 (PIGAGLAGGST). The active site involves aspartate 145.

This sequence belongs to the GHMP kinase family. IspE subfamily.

The catalysed reaction is 4-CDP-2-C-methyl-D-erythritol + ATP = 4-CDP-2-C-methyl-D-erythritol 2-phosphate + ADP + H(+). It participates in isoprenoid biosynthesis; isopentenyl diphosphate biosynthesis via DXP pathway; isopentenyl diphosphate from 1-deoxy-D-xylulose 5-phosphate: step 3/6. In terms of biological role, catalyzes the phosphorylation of the position 2 hydroxy group of 4-diphosphocytidyl-2C-methyl-D-erythritol. This Prochlorococcus marinus (strain NATL1A) protein is 4-diphosphocytidyl-2-C-methyl-D-erythritol kinase.